The primary structure comprises 203 residues: Glycerol-3-phosphate acyltransferase (203 aa).

4 consecutive transmembrane segments (helical) span residues 4–24, 80–100, 117–137, and 139–159; these read MAVTMTIIAYLLGSISSAVLI, PVLLGVIAIAACLGHMYPLFF, PIGLDLTGMIMATWLLVAILF, and YSSLAALVTVLLAPMYTWMIK.

Belongs to the PlsY family. As to quaternary structure, probably interacts with PlsX.

The protein localises to the cell inner membrane. The catalysed reaction is an acyl phosphate + sn-glycerol 3-phosphate = a 1-acyl-sn-glycero-3-phosphate + phosphate. Its pathway is lipid metabolism; phospholipid metabolism. Its function is as follows. Catalyzes the transfer of an acyl group from acyl-phosphate (acyl-PO(4)) to glycerol-3-phosphate (G3P) to form lysophosphatidic acid (LPA). This enzyme utilizes acyl-phosphate as fatty acyl donor, but not acyl-CoA or acyl-ACP. The protein is Glycerol-3-phosphate acyltransferase of Vibrio vulnificus (strain YJ016).